Consider the following 233-residue polypeptide: MDQDEGLTAVDNIVTQFNTYEDFLDSQITTVDLYYLEDESLARQLVELGYRGTGEIVKREDFEARKAAINIARQAERTQKKTLTSAGKELHDDFLKALAMREEDNRAGKLSTVIFIRDRNPHGQEVSGYIDYAHRLKSEDFEVYFNGKRRLLPRTTDMSFYNWDSHIAVCNSSPNYQVIADNPEGLLFKYKRDRKILNVDPKAHPGDNSTRIPIQTDLYAHVVLFDHVSRRKT.

Abundantly expressed in testis, specifically in spermatogonia and primary spermatocytes but not in secondary spermatocytes and spermatids.

The protein resides in the cytoplasm. Its subcellular location is the nucleus. Functionally, may be involved in spermatogenesis. The sequence is that of Cilia- and flagella-associated protein 299 from Mus musculus (Mouse).